The sequence spans 234 residues: MDELLRIATSWGLRLDQRQIEQFARYSAELRAWNMRVNLTSITDEREIVTRHFLDSLRCALSWGDTPSRLIDIGSGAGFPGLPLKILHPELHVTLVESVGKKAAFLQHIVAVLDLRDVTVVTARAEVVGRDPQHREQYDVVTARAVAELATLVEYGLPLCRIGGRFLAPKGSAIDDEVVRARIAIARLGGQVIGVEPVEIPGVELRTLVVIVKVAPTPAAYPRAVGIPAKRPIL.

S-adenosyl-L-methionine-binding positions include Gly74, Phe79, 125 to 126, and Arg144; that span reads AE.

This sequence belongs to the methyltransferase superfamily. RNA methyltransferase RsmG family.

It is found in the cytoplasm. Specifically methylates the N7 position of a guanine in 16S rRNA. The protein is Ribosomal RNA small subunit methyltransferase G of Roseiflexus castenholzii (strain DSM 13941 / HLO8).